Here is a 251-residue protein sequence, read N- to C-terminus: MLAKRIIPCLDVTGGRVVKGINFEGLRDAGSILEQARFYNNELADELVFLDISASLESRKTTLEEVMKVSGEVFIPLTVGGGINSVERAKDVFLHGADKVSVNTAAVNHPELISRIAEKYGSQAVVVAIDIKKIGSDHMVHTHSGKNPTAYEALEWAHKVQELGAGEILLTSMDRDGTREGYDNDILARVSTSVHIPVIASGGAGNLEHLYEGFTIGHADAALAASIFHFRQYSIRQAKQYLRDRGIEVRL.

Residues aspartate 11 and aspartate 130 contribute to the active site.

Belongs to the HisA/HisF family. In terms of assembly, heterodimer of HisH and HisF.

The protein resides in the cytoplasm. The enzyme catalyses 5-[(5-phospho-1-deoxy-D-ribulos-1-ylimino)methylamino]-1-(5-phospho-beta-D-ribosyl)imidazole-4-carboxamide + L-glutamine = D-erythro-1-(imidazol-4-yl)glycerol 3-phosphate + 5-amino-1-(5-phospho-beta-D-ribosyl)imidazole-4-carboxamide + L-glutamate + H(+). The protein operates within amino-acid biosynthesis; L-histidine biosynthesis; L-histidine from 5-phospho-alpha-D-ribose 1-diphosphate: step 5/9. IGPS catalyzes the conversion of PRFAR and glutamine to IGP, AICAR and glutamate. The HisF subunit catalyzes the cyclization activity that produces IGP and AICAR from PRFAR using the ammonia provided by the HisH subunit. The sequence is that of Imidazole glycerol phosphate synthase subunit HisF from Chlorobium phaeobacteroides (strain DSM 266 / SMG 266 / 2430).